We begin with the raw amino-acid sequence, 426 residues long: Gamma-glutamyl phosphate reductase (426 aa).

It belongs to the gamma-glutamyl phosphate reductase family.

Its subcellular location is the cytoplasm. The enzyme catalyses L-glutamate 5-semialdehyde + phosphate + NADP(+) = L-glutamyl 5-phosphate + NADPH + H(+). Its pathway is amino-acid biosynthesis; L-proline biosynthesis; L-glutamate 5-semialdehyde from L-glutamate: step 2/2. Its function is as follows. Catalyzes the NADPH-dependent reduction of L-glutamate 5-phosphate into L-glutamate 5-semialdehyde and phosphate. The product spontaneously undergoes cyclization to form 1-pyrroline-5-carboxylate. The polypeptide is Gamma-glutamyl phosphate reductase (Sorangium cellulosum (strain So ce56) (Polyangium cellulosum (strain So ce56))).